Consider the following 732-residue polypeptide: uncharacterized protein (732 aa).

The TR mART core domain maps to 163-390 (YYTINELNYL…FGIVAKKKYE (228 aa)). Active-site residues include R285, S309, and E354.

This is an uncharacterized protein from Acanthamoeba polyphaga mimivirus (APMV).